Reading from the N-terminus, the 75-residue chain is Acyl carrier protein (75 aa).

Residues 1–75 (MIFEKVRDII…DVVEYLSNLE (75 aa)) enclose the Carrier domain. Ser35 is modified (O-(pantetheine 4'-phosphoryl)serine).

The protein belongs to the acyl carrier protein (ACP) family. Post-translationally, 4'-phosphopantetheine is transferred from CoA to a specific serine of apo-ACP by AcpS. This modification is essential for activity because fatty acids are bound in thioester linkage to the sulfhydryl of the prosthetic group.

The protein localises to the cytoplasm. Its pathway is lipid metabolism; fatty acid biosynthesis. Its function is as follows. Carrier of the growing fatty acid chain in fatty acid biosynthesis. This Thermoanaerobacter pseudethanolicus (strain ATCC 33223 / 39E) (Clostridium thermohydrosulfuricum) protein is Acyl carrier protein.